A 320-amino-acid chain; its full sequence is Carbonic anhydrase 6 (320 aa).

The signal sequence occupies residues 1–17 (MRALALLLALPLLGARA). The region spanning 21 to 278 (SLWTYSEGAL…LNGRVVESNF (258 aa)) is the Alpha-carbonic anhydrase domain. Cysteine 42 and cysteine 224 are oxidised to a cystine. Histidine 85 serves as the catalytic Proton donor/acceptor. Zn(2+) is bound by residues histidine 111, histidine 113, and histidine 138. 220–221 (TT) is a substrate binding site. Residue asparagine 256 is glycosylated (N-linked (GlcNAc...) asparagine).

It belongs to the alpha-carbonic anhydrase family. The cofactor is Zn(2+).

It localises to the secreted. The catalysed reaction is hydrogencarbonate + H(+) = CO2 + H2O. Its function is as follows. Reversible hydration of carbon dioxide. Its role in saliva is unknown. This Canis lupus familiaris (Dog) protein is Carbonic anhydrase 6 (CA6).